The chain runs to 182 residues: T-cell surface glycoprotein CD3 gamma chain (182 aa).

Residues 1 to 22 (MEQGKGLAGLFLVISLLQGTMA) form the signal peptide. At 23–116 (QQKEEKHLVK…CIELNMGTVS (94 aa)) the chain is on the extracellular side. Residues 37-94 (QGDGSVLLTCDFNEKTITWLKDGHRISPPNATKSTWNLGNGAKDPRGMYQCRGAKKKS) enclose the Ig-like domain. A disulfide bond links Cys46 and Cys87. The N-linked (GlcNAc...) asparagine glycan is linked to Asn66. A helical membrane pass occupies residues 117–137 (GFIFAEIISIFFLAVGVYFIA). Over 138–182 (GQDGVRQSRASDKQTLLQNEQVYQPLKDREYEQYSRLQGNQVRKK) the chain is Cytoplasmic. At Ser145 the chain carries Phosphoserine. Ser148 is subject to Phosphoserine; by PKC. Residues 149 to 177 (DKQTLLQNEQVYQPLKDREYEQYSRLQGN) form the ITAM domain. The Di-leucine motif motif lies at 153-154 (LL).

As to quaternary structure, the TCR-CD3 complex is composed of a CD3D/CD3E and a CD3G/CD3E heterodimers that preferentially associate with TCRalpha and TCRbeta, respectively, to form TCRalpha/CD3E/CD3G and TCRbeta/CD3G/CD3E trimers. In turn, the hexamer interacts with CD3Z homodimer to form the TCR-CD3 complex. Alternatively, TCRalpha and TCRbeta can be replaced by TCRgamma and TCRdelta. In terms of processing, phosphorylated on Tyr residues after T-cell receptor triggering by LCK in association with CD4/CD8. Phosphorylated also by PKC; leading to the TCR complex down-regulation. Post-translationally, phosphorylated on Tyr residues after T-cell receptor triggering by LCK in association with CD4/CD8.

The protein resides in the cell membrane. In terms of biological role, part of the TCR-CD3 complex present on T-lymphocyte cell surface that plays an essential role in adaptive immune response. When antigen presenting cells (APCs) activate T-cell receptor (TCR), TCR-mediated signals are transmitted across the cell membrane by the CD3 chains CD3D, CD3E, CD3G and CD3Z. All CD3 chains contain immunoreceptor tyrosine-based activation motifs (ITAMs) in their cytoplasmic domain. Upon TCR engagement, these motifs become phosphorylated by Src family protein tyrosine kinases LCK and FYN, resulting in the activation of downstream signaling pathways. In addition to this role of signal transduction in T-cell activation, CD3G plays an essential role in the dynamic regulation of TCR expression at the cell surface. Indeed, constitutive TCR cycling is dependent on the di-leucine-based (diL) receptor-sorting motif present in CD3G. This chain is T-cell surface glycoprotein CD3 gamma chain (Cd3g), found in Rattus norvegicus (Rat).